A 508-amino-acid chain; its full sequence is Photosystem II CP47 reaction center protein (508 aa).

The next 6 helical transmembrane spans lie at 21 to 36 (SVHI…WAGS), 101 to 115 (IVFS…IWHW), 140 to 156 (GIHL…FGAF), 203 to 218 (IAAG…FHLS), 237 to 252 (VLSS…AFVV), and 457 to 472 (TFAL…HGAR).

It belongs to the PsbB/PsbC family. PsbB subfamily. In terms of assembly, PSII is composed of 1 copy each of membrane proteins PsbA, PsbB, PsbC, PsbD, PsbE, PsbF, PsbH, PsbI, PsbJ, PsbK, PsbL, PsbM, PsbT, PsbX, PsbY, PsbZ, Psb30/Ycf12, at least 3 peripheral proteins of the oxygen-evolving complex and a large number of cofactors. It forms dimeric complexes. Requires Binds multiple chlorophylls. PSII binds additional chlorophylls, carotenoids and specific lipids. as cofactor.

Its subcellular location is the plastid. The protein localises to the chloroplast thylakoid membrane. Functionally, one of the components of the core complex of photosystem II (PSII). It binds chlorophyll and helps catalyze the primary light-induced photochemical processes of PSII. PSII is a light-driven water:plastoquinone oxidoreductase, using light energy to abstract electrons from H(2)O, generating O(2) and a proton gradient subsequently used for ATP formation. The polypeptide is Photosystem II CP47 reaction center protein (Oryza sativa subsp. indica (Rice)).